The following is a 93-amino-acid chain: Putative pterin-4-alpha-carbinolamine dehydratase (93 aa).

The protein belongs to the pterin-4-alpha-carbinolamine dehydratase family.

The enzyme catalyses (4aS,6R)-4a-hydroxy-L-erythro-5,6,7,8-tetrahydrobiopterin = (6R)-L-erythro-6,7-dihydrobiopterin + H2O. The protein is Putative pterin-4-alpha-carbinolamine dehydratase of Sulfurisphaera tokodaii (strain DSM 16993 / JCM 10545 / NBRC 100140 / 7) (Sulfolobus tokodaii).